Reading from the N-terminus, the 127-residue chain is Methylglyoxal synthase (127 aa).

Residues 1–127 enclose the MGS-like domain; it reads MEGQRCIALI…ENLIDFNSAD (127 aa). Residues His-12, Lys-16, 38-41, and 59-60 each bind substrate; these read TGTT and SG. Residue Asp-65 is the Proton donor/acceptor of the active site. Substrate is bound at residue His-92.

Belongs to the methylglyoxal synthase family.

The catalysed reaction is dihydroxyacetone phosphate = methylglyoxal + phosphate. Its function is as follows. Catalyzes the formation of methylglyoxal from dihydroxyacetone phosphate. The protein is Methylglyoxal synthase of Agrobacterium fabrum (strain C58 / ATCC 33970) (Agrobacterium tumefaciens (strain C58)).